We begin with the raw amino-acid sequence, 197 residues long: Large ribosomal subunit protein mL58 (197 aa).

The transit peptide at 1-20 (MLFTIKPSFLKPVGFIQTRN) directs the protein to the mitochondrion.

This sequence belongs to the mitochondrion-specific ribosomal protein mL58 family. Component of the mitochondrial large ribosomal subunit (mt-LSU). Mature yeast 74S mitochondrial ribosomes consist of a small (37S) and a large (54S) subunit. The 37S small subunit contains a 15S ribosomal RNA (15S mt-rRNA) and at least 32 different proteins. The 54S large subunit contains a 21S rRNA (21S mt-rRNA) and at least 45 different proteins.

It localises to the mitochondrion. Component of the mitochondrial ribosome (mitoribosome), a dedicated translation machinery responsible for the synthesis of mitochondrial genome-encoded proteins, including at least some of the essential transmembrane subunits of the mitochondrial respiratory chain. The mitoribosomes are attached to the mitochondrial inner membrane and translation products are cotranslationally integrated into the membrane. The sequence is that of Large ribosomal subunit protein mL58 (mrpl20) from Schizosaccharomyces pombe (strain 972 / ATCC 24843) (Fission yeast).